Reading from the N-terminus, the 103-residue chain is Large ribosomal subunit protein bL21 (103 aa).

Belongs to the bacterial ribosomal protein bL21 family. As to quaternary structure, part of the 50S ribosomal subunit. Contacts protein L20.

In terms of biological role, this protein binds to 23S rRNA in the presence of protein L20. This Chloroflexus aggregans (strain MD-66 / DSM 9485) protein is Large ribosomal subunit protein bL21.